The following is a 336-amino-acid chain: Casein kinase II subunit alpha (336 aa).

Residues Tyr32 to Phe317 form the Protein kinase domain. Residues Ile38 to Val46 and Lys61 contribute to the ATP site. Asp149 acts as the Proton acceptor in catalysis.

It belongs to the protein kinase superfamily. Ser/Thr protein kinase family. CK2 subfamily. In terms of assembly, tetramer composed of two alpha chains, one beta chain and one beta' chain.

The catalysed reaction is L-seryl-[protein] + ATP = O-phospho-L-seryl-[protein] + ADP + H(+). The enzyme catalyses L-threonyl-[protein] + ATP = O-phospho-L-threonyl-[protein] + ADP + H(+). Functionally, catalytic subunit of a constitutively active serine/threonine-protein kinase complex that phosphorylates a large number of substrates containing acidic residues C-terminal to the phosphorylated serine or threonine. Phosphorylates the frq clock protein thus regulating the circadian clock. This is Casein kinase II subunit alpha (cka) from Neurospora crassa (strain ATCC 24698 / 74-OR23-1A / CBS 708.71 / DSM 1257 / FGSC 987).